We begin with the raw amino-acid sequence, 224 residues long: Flagellar L-ring protein (224 aa).

A signal peptide spans 1–15 (MARYFILAAALLLTA). Residue cysteine 16 is the site of N-palmitoyl cysteine attachment. Cysteine 16 carries S-diacylglycerol cysteine lipidation.

This sequence belongs to the FlgH family. In terms of assembly, the basal body constitutes a major portion of the flagellar organelle and consists of four rings (L,P,S, and M) mounted on a central rod.

It is found in the cell outer membrane. Its subcellular location is the bacterial flagellum basal body. In terms of biological role, assembles around the rod to form the L-ring and probably protects the motor/basal body from shearing forces during rotation. This is Flagellar L-ring protein from Shewanella sp. (strain MR-4).